Consider the following 464-residue polypeptide: Elongation factor 1-alpha (464 aa).

In terms of domain architecture, tr-type G spans 5–242 (KTHINIVVIG…DSVVPPQRPT (238 aa)). Residues 14–21 (GHVDSGKS), 91–95 (DAPGH), and 153–156 (NKMD) contribute to the GTP site. 5-glutamyl glycerylphosphorylethanolamine occurs at positions 301 and 374.

Belongs to the TRAFAC class translation factor GTPase superfamily. Classic translation factor GTPase family. EF-Tu/EF-1A subfamily.

Its subcellular location is the cytoplasm. Functionally, this protein promotes the GTP-dependent binding of aminoacyl-tRNA to the A-site of ribosomes during protein biosynthesis. This chain is Elongation factor 1-alpha, found in Onchocerca volvulus.